Reading from the N-terminus, the 542-residue chain is Glutamyl-tRNA reductase 2, chloroplastic (542 aa).

Substrate contacts are provided by residues 142–145, Ser202, 207–209, and Gln213; these read TCNR and EGQ. Cys143 serves as the catalytic Nucleophile. An NADP(+)-binding site is contributed by 284–289; that stretch reads GAGKMG.

It belongs to the glutamyl-tRNA reductase family. As to expression, found in all tissues examined.

The protein resides in the plastid. The protein localises to the chloroplast. It catalyses the reaction (S)-4-amino-5-oxopentanoate + tRNA(Glu) + NADP(+) = L-glutamyl-tRNA(Glu) + NADPH + H(+). It functions in the pathway porphyrin-containing compound metabolism; protoporphyrin-IX biosynthesis; 5-aminolevulinate from L-glutamyl-tRNA(Glu): step 1/2. Functionally, catalyzes the NADPH-dependent reduction of glutamyl-tRNA(Glu) to glutamate 1-semialdehyde (GSA). The protein is Glutamyl-tRNA reductase 2, chloroplastic (HEMA2) of Cucumis sativus (Cucumber).